Reading from the N-terminus, the 247-residue chain is Triosephosphate isomerase (247 aa).

9 to 11 (NWK) lines the substrate pocket. The Electrophile role is filled by H94. Catalysis depends on E165, which acts as the Proton acceptor. Substrate is bound by residues G171, S209, and 230-231 (GG).

Belongs to the triosephosphate isomerase family. In terms of assembly, homodimer.

The protein resides in the cytoplasm. It carries out the reaction D-glyceraldehyde 3-phosphate = dihydroxyacetone phosphate. The protein operates within carbohydrate biosynthesis; gluconeogenesis. It functions in the pathway carbohydrate degradation; glycolysis; D-glyceraldehyde 3-phosphate from glycerone phosphate: step 1/1. Involved in the gluconeogenesis. Catalyzes stereospecifically the conversion of dihydroxyacetone phosphate (DHAP) to D-glyceraldehyde-3-phosphate (G3P). This chain is Triosephosphate isomerase, found in Albidiferax ferrireducens (strain ATCC BAA-621 / DSM 15236 / T118) (Rhodoferax ferrireducens).